The chain runs to 316 residues: WEB family protein At3g13190 (316 aa).

3 coiled-coil regions span residues 42–90, 119–195, and 233–266; these read WNKE…MIND, EEES…AEEH, and RDET…MAQE. Residues 295-316 form a disordered region; that stretch reads STKEVLKSKPRSSSKEGCLVKC.

The protein belongs to the WEB family.

The polypeptide is WEB family protein At3g13190 (Arabidopsis thaliana (Mouse-ear cress)).